A 288-amino-acid chain; its full sequence is MDVTAKYELIGLMAYPIRHSLSPEMQNKALEKAGLPFTYMAFEVDNDSFPGAIEGLKALKMRGTGVSMPNKQLACEYVDELTPAAKLVGAINTIVNDDGYLRGYNTDGTGHIRAIKESGFDIKGKTMVLLGAGGASTAIGAQGAIEGLKEIKLFNRRDEFFDKALAFAQRVNENTDCVVTVTDLADQQAFAEVLASADILTNGTKVGMNPLENESLVNDISLLHPGLLVTECVYNPHMTKLLQQAQQAGCKTIDGYGMLLWQGAEQFTLWTGKDFPLEYVKQVMGFGA.

Substrate-binding residues include K71 and D107. NAD(+) is bound by residues 132–135 (AGGA), 155–158 (NRRD), K205, 232–235 (CVYN), and G255.

It belongs to the shikimate dehydrogenase family. In terms of assembly, homodimer.

The enzyme catalyses L-quinate + NAD(+) = 3-dehydroquinate + NADH + H(+). It carries out the reaction L-quinate + NADP(+) = 3-dehydroquinate + NADPH + H(+). It catalyses the reaction shikimate + NADP(+) = 3-dehydroshikimate + NADPH + H(+). The catalysed reaction is shikimate + NAD(+) = 3-dehydroshikimate + NADH + H(+). The protein operates within metabolic intermediate biosynthesis; chorismate biosynthesis; chorismate from D-erythrose 4-phosphate and phosphoenolpyruvate: step 4/7. Its function is as follows. The actual biological function of YdiB remains unclear, nor is it known whether 3-dehydroshikimate or quinate represents the natural substrate. Catalyzes the reversible NAD-dependent reduction of both 3-dehydroshikimate (DHSA) and 3-dehydroquinate to yield shikimate (SA) and quinate, respectively. It can use both NAD or NADP for catalysis, however it has higher catalytic efficiency with NAD. This Shigella sonnei (strain Ss046) protein is Quinate/shikimate dehydrogenase.